The following is a 192-amino-acid chain: E3 ubiquitin-protein ligase RNF185 (192 aa).

Residues 1-14 (MASKGPSASASTEN) show a composition bias toward polar residues. A disordered region spans residues 1 to 30 (MASKGPSASASTENSSAGGPSGSSNGTGES). Topologically, residues 1-130 (MASKGPSASA…GGFQGFGFGD (130 aa)) are cytoplasmic. The span at 15-27 (SSAGGPSGSSNGT) shows a compositional bias: low complexity. A required for ubiquitin ligase activity and protection against ER stress-induced cell death region spans residues 29 to 80 (ESGGQDSTFECNICLDTAKDAVISLCGHLFCWPCLHQWLETRPNRQVCPVCK). Residues 39-80 (CNICLDTAKDAVISLCGHLFCWPCLHQWLETRPNRQVCPVCK) form an RING-type zinc finger. Residues 90–123 (PLYGRGSTGQQDPREKTPPRPQGQRPEPENRGGF) are disordered. Residues 131–151 (GGFQMSFGIGAFPFGIFATAF) form a helical membrane-spanning segment. Residues 152–171 (NINDGRPPPAVPGTPQYVDE) are Mitochondrial intermembrane-facing. Residues 172-192 (QFLSRLFLFVALVIMFWLLIA) form a helical membrane-spanning segment.

Interacts with ATG5 and BNIP1.

The protein localises to the mitochondrion outer membrane. It localises to the endoplasmic reticulum membrane. It carries out the reaction S-ubiquitinyl-[E2 ubiquitin-conjugating enzyme]-L-cysteine + [acceptor protein]-L-lysine = [E2 ubiquitin-conjugating enzyme]-L-cysteine + N(6)-ubiquitinyl-[acceptor protein]-L-lysine.. Its pathway is protein modification; protein ubiquitination. Its function is as follows. E3 ubiquitin-protein ligase that regulates selective mitochondrial autophagy by mediating 'Lys-63'-linked polyubiquitination of BNIP1. Acts in the endoplasmic reticulum (ER)-associated degradation (ERAD) pathway, which targets misfolded proteins that accumulate in the endoplasmic reticulum (ER) for ubiquitination and subsequent proteasome-mediated degradation. Protects cells from ER stress-induced apoptosis. Responsible for the cotranslational ubiquitination and degradation of CFTR in the ERAD pathway. Also acts as a regulator of the innate antiviral response by catalyzing 'Lys-27'-linked polyubiquitination of CGAS, thereby promoting CGAS cyclic GMP-AMP synthase activity. Preferentially associates with the E2 enzymes UBE2J1 and UBE2J2. In Rattus norvegicus (Rat), this protein is E3 ubiquitin-protein ligase RNF185 (Rnf185).